Consider the following 478-residue polypeptide: Aspartate ammonia-lyase (478 aa).

Residues threonine 104, serine 143, threonine 144, asparagine 145, and threonine 190 each contribute to the L-aspartate site. The tract at residues 320-329 is SS loop; that stretch reads GSSIMPAKVN. Serine 321 acts as the Proton acceptor in catalysis. L-aspartate-binding residues include serine 322 and lysine 327.

Belongs to the class-II fumarase/aspartase family. Aspartase subfamily. In terms of assembly, homotetramer.

It catalyses the reaction L-aspartate = fumarate + NH4(+). Catalyzes the reversible conversion of L-aspartate to fumarate and ammonia. This Escherichia coli O157:H7 protein is Aspartate ammonia-lyase (aspA).